The following is a 270-amino-acid chain: tRNA pseudouridine synthase A (270 aa).

D60 functions as the Nucleophile in the catalytic mechanism. Positions 107 to 111 (FHARF) are RNA binding. A substrate-binding site is contributed by Y118. The interaction with tRNA stretch occupies residues 168 to 172 (QCQSR).

Belongs to the tRNA pseudouridine synthase TruA family. As to quaternary structure, homodimer.

It catalyses the reaction uridine(38/39/40) in tRNA = pseudouridine(38/39/40) in tRNA. In terms of biological role, formation of pseudouridine at positions 38, 39 and 40 in the anticodon stem and loop of transfer RNAs. This is tRNA pseudouridine synthase A from Escherichia coli (strain K12 / DH10B).